The chain runs to 140 residues: Gastrula zinc finger protein XlCGF49.1 (140 aa).

5 C2H2-type zinc fingers span residues 6 to 28, 34 to 56, 62 to 84, 90 to 112, and 118 to 140; these read FTCM…YKIH, FTCM…YKMH, FSCS…QKIH, YACT…WKIH, and FSCT…QKMH.

It belongs to the krueppel C2H2-type zinc-finger protein family.

Its subcellular location is the nucleus. Functionally, may be involved in transcriptional regulation. The chain is Gastrula zinc finger protein XlCGF49.1 from Xenopus laevis (African clawed frog).